Here is a 331-residue protein sequence, read N- to C-terminus: MWLWEEQGGLMGPFSFLLLVLLLLTRSPFNACLFTGSLYLLLRLFSFEPVPSRRAMQVLKPRDRVSAIAHRGGSHDAPENTLAAIRQAAKNGAAGVELDLEFTADGIPVLMHDSTVDRTTDGTGRLCDLTFEQIRKLNPAANHRLRNDFPNEKIPTLREAVAECLNHNLTIFFDVKGHAYKATDALKKVYMEFPKLYNNSIVCSFLPEVIYKMRQTDQNVVTALIHRPWSLSHTGDGKPRFESFWKQSMFVALDILLDWSMHNILWYLCGVSAFLAQKDFISPDYVKKWSAKGIQVVAWTVNTFDEKSYYESHLGSSYITDSMLEDCTPEF.

Topologically, residues 1-2 (MW) are cytoplasmic. Residues 3 to 23 (LWEEQGGLMGPFSFLLLVLLL) traverse the membrane as a helical segment. The Lumenal segment spans residues 24 to 254 (LTRSPFNACL…WKQSMFVALD (231 aa)). The GP-PDE domain occupies 65–331 (VSAIAHRGGS…SMLEDCTPEF (267 aa)). 2 residues coordinate Mg(2+): Glu-97 and Asp-99. N-linked (GlcNAc...) asparagine glycosylation is present at Asn-168. A Mg(2+)-binding site is contributed by Asp-174. Asn-198 carries N-linked (GlcNAc...) asparagine glycosylation. The chain crosses the membrane as a helical span at residues 255–275 (ILLDWSMHNILWYLCGVSAFL). Over 276 to 331 (AQKDFISPDYVKKWSAKGIQVVAWTVNTFDEKSYYESHLGSSYITDSMLEDCTPEF) the chain is Cytoplasmic.

Belongs to the glycerophosphoryl diester phosphodiesterase family. As to quaternary structure, interacts with PRAF2. Interacts with RGS16. Mg(2+) serves as cofactor. In terms of processing, N-glycosylated.

The protein localises to the cell membrane. The protein resides in the cytoplasmic vesicle membrane. The catalysed reaction is sn-glycero-3-phospho-1D-myo-inositol + H2O = myo-inositol + sn-glycerol 3-phosphate + H(+). It catalyses the reaction 1-O-(1Z-octadecenyl)-sn-glycero-3-phospho-(N-5Z,8Z,11Z,14Z-eicosatetraenoyl)-ethanolamine + H2O = 1-O-(1Z-octadecenyl)-sn-glycero-3-phosphate + N-(5Z,8Z,11Z,14Z-eicosatetraenoyl)-ethanolamine + H(+). It carries out the reaction 1-O-(1Z-octadecenyl)-sn-glycero-3-phospho-(N-9Z-octadecenoyl)-ethanolamine + H2O = 1-O-(1Z-octadecenyl)-sn-glycero-3-phosphate + N-(9Z-octadecenoyl) ethanolamine + H(+). The enzyme catalyses 1-O-(1Z-octadecenyl)-sn-glycero-3-phospho-N-hexadecanoyl-ethanolamine + H2O = 1-O-(1Z-octadecenyl)-sn-glycero-3-phosphate + N-hexadecanoylethanolamine + H(+). The catalysed reaction is N-(4Z,7Z,10Z,13Z,16Z,19Z)-docosahexaenoyl-sn-glycero-3-phosphoethanolamine + H2O = N-(4Z,7Z,10Z,13Z,16Z,19Z)-docosahexaenoyl ethanolamine + sn-glycerol 3-phosphate + H(+). It catalyses the reaction N-eicosanoyl-sn-glycero-3-phosphoethanolamine + H2O = N-eicosanoyl ethanolamine + sn-glycerol 3-phosphate + H(+). It carries out the reaction N-hexadecanoyl-sn-glycero-3-phosphoethanolamine + H2O = N-hexadecanoylethanolamine + sn-glycerol 3-phosphate + H(+). The enzyme catalyses N-(9Z-octadecenoyl)-sn-glycero-3-phosphoethanolamine + H2O = N-(9Z-octadecenoyl) ethanolamine + sn-glycerol 3-phosphate + H(+). The catalysed reaction is N-(5Z,8Z,11Z,14Z-eicosatetraenoyl)-sn-glycero-3-phosphoethanolamine + H2O = N-(5Z,8Z,11Z,14Z-eicosatetraenoyl)-ethanolamine + sn-glycerol 3-phosphate + H(+). Its activity is regulated as follows. Inhibited by EDTA, calcium chloride, and zinc chloride. Enhanced by magnesium chloride. Glycerophosphodiester phosphodiesterase activity can be modulated by G-protein signaling pathways. In terms of biological role, hydrolyzes the phosphodiester bond of glycerophosphodiesters such as glycerophosphoinositol (GroPIns) and glycerophosphoethanolamine (GroPEth), to yield a glycerol phosphate and an alcohol. Hydrolyzes glycerophospho-N-acylethanolamines to N-acylethanolamines in the brain and participates in bioactive N-acylethanolamine biosynthesis such as anandamide (an endocannabinoid), N-palmitoylethanolamine (an anti-inflammatory), and N-oleoylethanolamine (an anorexic). In addition, has a lysophospholipase D activity by hydrolyzing N-acyl-lysoplasmenylethanolamine (N-acyl-lysoPlsEt) to N-acylethanolamine. However lysophospholipase D activity is lower than glycerophosphodiester phosphodiesterase activity. Has little or no activity towards glycerophosphocholine. This is Glycerophosphodiester phosphodiesterase 1 from Bos taurus (Bovine).